The primary structure comprises 271 residues: uncharacterized protein (271 aa).

Residues 1–18 (MKGFFLIAGFLLFARALC) form the signal peptide. The Lumenal segment spans residues 19–187 (ASWNVEEGTL…FSPPPKRANY (169 aa)). A helical transmembrane segment spans residues 188–208 (FLSICFSVSVVVSLIGLLGVW). Over 209–230 (QKLLPKSNVYSVSSSSFARTFG) the chain is Cytoplasmic. The helical transmembrane segment at 231 to 251 (FASLAVAEILLFIYWTSLSIF) threads the bilayer. Residues 252 to 271 (QFGAYAAGVAIMCGIAAKSL) lie on the Lumenal side of the membrane.

The protein resides in the endoplasmic reticulum membrane. This is an uncharacterized protein from Schizosaccharomyces pombe (strain 972 / ATCC 24843) (Fission yeast).